Reading from the N-terminus, the 586-residue chain is Proton channel OTOP1 (586 aa).

Residues 1-52 lie on the Cytoplasmic side of the membrane; that stretch reads MVEHGGTDSMWLNKYNPAAASSASSSSSSDAENKLFSRLKVSLTKKYPQKNA. The chain crosses the membrane as a helical span at residues 53–74; the sequence is ELLSAQYGTNLLLLGVSVMLAL. The Extracellular segment spans residues 75–82; sequence AAQSGPVK. The chain crosses the membrane as a helical span at residues 83-106; sequence EEHLLSFITVLMLVQLVWMLCYMI. Residues 107–124 lie on the Cytoplasmic side of the membrane; that stretch reads RRERERSPVPERDAHAGA. The helical transmembrane segment at 125–147 threads the bilayer; that stretch reads SWIRGGLTMLALLSLIMDAFRIG. Topologically, residues 148–157 are extracellular; the sequence is YFVGYHSCIS. Residues 158 to 182 form a helical membrane-spanning segment; that stretch reads AALGVYPIVHALHTISQVHFLWFHI. At 183 to 190 the chain is on the cytoplasmic side; that stretch reads KDVIKKYE. A helical membrane pass occupies residues 191 to 217; it reads TFERFGVIHAVFTNLLLWCNGVMSETE. Residues 218–255 lie on the Extracellular side of the membrane; the sequence is HFMHNHRRRLIEMGYANLSTVDVQPHCNCTTSVCSMFS. The helical transmembrane segment at 256–281 threads the bilayer; sequence TSLYYLYPFNIEYHIFVSAMLFVMWK. The Cytoplasmic segment spans residues 282–303; it reads NIGRTLDRHSNRKRRSTGSTGL. The helical transmembrane segment at 304–326 threads the bilayer; it reads LLGPLGGLVALASSVSVLVVYLI. Residues 327 to 336 lie on the Extracellular side of the membrane; it reads HLEKTEEMHE. Residues 337-362 form a helical membrane-spanning segment; that stretch reads AAVSMFYYYGVAMMACMCVGSGTGLL. Over 363–380 the chain is Cytoplasmic; that stretch reads VYRMENRPMDTGSNPART. Residues 381–405 traverse the membrane as a helical segment; the sequence is LDTELLLASSLGSWLMSWCSVVASV. The Extracellular portion of the chain corresponds to 406-417; it reads AEAGQKSPSFSW. A helical transmembrane segment spans residues 418–438; that stretch reads TSLTYSLLLVLEKCIQNLFIV. The Cytoplasmic segment spans residues 439-518; sequence ESLYRRHSEE…TPGRKRQILK (80 aa). A disordered region spans residues 484–505; sequence PAAGSHALSRKQPDAPLPAGQR. Residues 519-537 traverse the membrane as a helical segment; the sequence is NICMFLFMCNISLWILPAF. Residues 538–555 are Extracellular-facing; the sequence is GCRPQYDNPLENETFGTS. The helical transmembrane segment at 556 to 579 threads the bilayer; the sequence is VWTTVLNVAIPLNLFYRMHSVASL. Topologically, residues 580 to 586 are cytoplasmic; it reads FEVFRKV.

It belongs to the otopetrin family. In terms of assembly, homodimer.

The protein localises to the cell membrane. It is found in the cell projection. It localises to the microvillus. It catalyses the reaction H(+)(in) = H(+)(out). Its activity is regulated as follows. Activated by both acid and alkali, with proton influx in response to extracellular acid and proton efflux during alkali stimulation. Inhibited by Zn(2+); this inhibition is thought to be pH-sensitive. Currents evoked in response to mild acid (pH 6.0) stimulus may also be mildly potentiated by exposure to Zn(2+). Activated by NH(4)Cl. In terms of biological role, proton-selective ion channel. Biphasically modulated by acid and alkali, mediating proton influx and efflux in response to extracellular acid and base stimulation, respectively. May be involved in acid and base perception. Sensor for ammonium chloride (NH(4)Cl) in taste receptor cells. NH(4)Cl acts by increasing the intracellular pH, thereby generating a driving force for proton entry through OTOP1 channel. Plays a role in the regulation of Ca(2+) flux in response to purigenic (ATP, ADP and UDP) stimuli, leading to increase in cytosolic Ca(2+) due to influx of extracellular calcium. May play this role by inhibiting P2Y purinoceptor-mediated Ca(2+) release in a Ca(2+)-dependent manner and promote an influx of Ca(2+) in response to ATP. Through this mechanism and possibly others, plays a role in the formation and function of calcium carbonate-based structures in the vestibular system of the inner ear, called otoconia, that sense gravity and linear acceleration. The protein is Proton channel OTOP1 of Danio rerio (Zebrafish).